The primary structure comprises 772 residues: Endoplasmic reticulum membrane sensor NFE2L1 (772 aa).

The chain crosses the membrane as a helical; Signal-anchor for type II membrane protein span at residues 7-24 (YLTEGLLQFTILLSLIGV). The interval 108-148 (DPEGSVSGSQPNSGLALESSSGLQDVTGPDNGVRESETEQG) is disordered. Over residues 113–131 (VSGSQPNSGLALESSSGLQ) the composition is skewed to polar residues. A cholesterol recognition/amino acid consensus (CRAC) region region spans residues 191–199 (VFDYSHRQK). N-linked (GlcNAc...) asparagine glycans are attached at residues Asn-348 and Asn-360. Residues 379–383 (SPEVE) are CPD. N-linked (GlcNAc...) asparagine glycosylation is found at Asn-412 and Asn-423. Disordered regions lie at residues 470–532 (EEEF…DSET) and 582–613 (SALD…QMSR). The Destruction motif signature appears at 476-480 (DSGLS). Residues 476-523 (DSGLSLDSSHSPSSLSSSEGSSSSSSSSSSSSSSASSSASSSFSEEGA) are compositionally biased toward low complexity. At Ser-528 the chain carries Phosphoserine; by CK2. Positions 598–613 (GSKEKQADFLDKQMSR) are enriched in basic and acidic residues. Position 599 is a phosphoserine; by PKA (Ser-599). Residues 654 to 717 (LIRDIRRRGK…RQMKQKVQSL (64 aa)) enclose the bZIP domain. The segment at 656–675 (RDIRRRGKNKMAAQNCRKRK) is basic motif. A leucine-zipper region spans residues 682 to 696 (LERDVEDLQRDKARL).

The protein belongs to the bZIP family. CNC subfamily. As to quaternary structure, interacts with KEAP1. In terms of assembly, interacts (via CPD region) with FBXW7; leading to its ubiquitination and degradation. Interacts with SYVN1/HRD1; leading to its ubiquitination and degradation. Interacts (when ubiquitinated) with DDI2; leading to its cleavage. Interacts (via the bZIP domain) with small MAF protein (MAFF, MAFG or MAFK); required for binding to antioxidant response elements (AREs) on DNA. Interacts (via Destruction motif) with BTRC; leading to its ubiquitination and degradation. Interacts with CEBPB; the heterodimer represses expression of DSPP during odontoblast differentiation. Interacts with MOTS-c, a peptide produced by the mitochondrially encoded 12S rRNA MT-RNR1. In terms of processing, cleaved at Leu-104 by the aspartyl protease DDI2 following retrotranslocation, releasing the protein from the endoplasmic reticulum membrane and forming the transcription factor NRF1 that translocates into the nucleus. Ubiquitination is prerequisite for cleavage by aspartyl protease DDI2. N-glycosylated in normal conditions, when it has a single-pass type II membrane protein topology, with the DNA-binding domain facing the endoplasmic reticulum lumen. Deglycosylated during retrotranslocation to the cytosolic side of the membrane, to have a single-pass type III membrane protein topology with the major part of the protein facing the cytosol. Post-translationally, ubiquitinated by the SCF(FBXW7) complex and SYVN1/HRD1, leading to its degradation by the proteasome. Ubiquitinated during retrotranslocation to the cytosolic side of the membrane: ubiquitination does not lead to degradation and is required for processing by the aspartyl protease DDI2 and subsequent release from the endoplasmic reticulum membrane. In terms of processing, phosphorylation by CK2 at Ser-528 inhibits transcription factor activity, possibly by affecting DNA-binding activity. Phosphorylation at Ser-599 is required for interaction with CEBPB. Ubiquitinated by the SCF(BTRC) complex in the nucleus, leading to its degradation by the proteasome.

The protein localises to the endoplasmic reticulum membrane. It is found in the nucleus. In terms of biological role, endoplasmic reticulum membrane sensor that translocates into the nucleus in response to various stresses to act as a transcription factor. Constitutes a precursor of the transcription factor NRF1. Able to detect various cellular stresses, such as cholesterol excess, oxidative stress or proteasome inhibition. In response to stress, it is released from the endoplasmic reticulum membrane following cleavage by the protease DDI2 and translocates into the nucleus to form the transcription factor NRF1. Acts as a key sensor of cholesterol excess: in excess cholesterol conditions, the endoplasmic reticulum membrane form of the protein directly binds cholesterol via its CRAC motif, preventing cleavage and release of the transcription factor NRF1, thereby allowing expression of genes promoting cholesterol removal, such as CD36. Involved in proteasome homeostasis: in response to proteasome inhibition, it is released from the endoplasmic reticulum membrane, translocates to the nucleus and activates expression of genes encoding proteasome subunits. CNC-type bZIP family transcription factor that translocates to the nucleus and regulates expression of target genes in response to various stresses. Heterodimerizes with small-Maf proteins (MAFF, MAFG or MAFK) and binds DNA motifs including the antioxidant response elements (AREs), which regulate expression of genes involved in oxidative stress response. Activates or represses expression of target genes, depending on the context. Plays a key role in cholesterol homeostasis by acting as a sensor of cholesterol excess: in low cholesterol conditions, translocates into the nucleus and represses expression of genes involved in defense against cholesterol excess, such as CD36. In excess cholesterol conditions, the endoplasmic reticulum membrane form of the protein directly binds cholesterol via its CRAC motif, preventing cleavage and release of the transcription factor NRF1, thereby allowing expression of genes promoting cholesterol removal. Critical for redox balance in response to oxidative stress: acts by binding the AREs motifs on promoters and mediating activation of oxidative stress response genes, such as GCLC, GCLM, GSS, MT1 and MT2. Plays an essential role during fetal liver hematopoiesis: probably has a protective function against oxidative stress and is involved in lipid homeostasis in the liver. Involved in proteasome homeostasis: in response to proteasome inhibition, mediates the 'bounce-back' of proteasome subunits by translocating into the nucleus and activating expression of genes encoding proteasome subunits. Also involved in regulating glucose flux. Together with CEBPB; represses expression of DSPP during odontoblast differentiation. In response to ascorbic acid induction, activates expression of SP7/Osterix in osteoblasts. This chain is Endoplasmic reticulum membrane sensor NFE2L1 (NFE2L1), found in Homo sapiens (Human).